Consider the following 70-residue polypeptide: DNA-directed RNA polymerase subunit omega (70 aa).

This sequence belongs to the RNA polymerase subunit omega family. The RNAP catalytic core consists of 2 alpha, 1 beta, 1 beta' and 1 omega subunit. When a sigma factor is associated with the core the holoenzyme is formed, which can initiate transcription.

The catalysed reaction is RNA(n) + a ribonucleoside 5'-triphosphate = RNA(n+1) + diphosphate. Its function is as follows. Promotes RNA polymerase assembly. Latches the N- and C-terminal regions of the beta' subunit thereby facilitating its interaction with the beta and alpha subunits. The sequence is that of DNA-directed RNA polymerase subunit omega from Staphylococcus haemolyticus (strain JCSC1435).